Reading from the N-terminus, the 141-residue chain is Large ribosomal subunit protein uL11 (141 aa).

The protein belongs to the universal ribosomal protein uL11 family. In terms of assembly, part of the ribosomal stalk of the 50S ribosomal subunit. Interacts with L10 and the large rRNA to form the base of the stalk. L10 forms an elongated spine to which L12 dimers bind in a sequential fashion forming a multimeric L10(L12)X complex. One or more lysine residues are methylated.

Functionally, forms part of the ribosomal stalk which helps the ribosome interact with GTP-bound translation factors. This is Large ribosomal subunit protein uL11 from Streptococcus mutans serotype c (strain ATCC 700610 / UA159).